The chain runs to 712 residues: WD repeat-containing protein 91 (712 aa).

The stretch at 148–180 (RRTNQVQEENEVLRQKLFALQAEIHRLKKEEQQ) forms a coiled coil. At Ser-221 the chain carries Phosphoserine. A compositionally biased stretch (low complexity) spans 230–243 (LLPQSKKSPSRLSP). The disordered stretch occupies residues 230 to 336 (LLPQSKKSPS…EAEPCPELHT (107 aa)). 2 positions are modified to phosphoserine: Ser-253 and Ser-258. A compositionally biased stretch (basic and acidic residues) spans 297–308 (RLQDHGKERKEL). 7 WD repeats span residues 371-410 (EHHSSIMHCRVDCSGRRVASLDVDGVIKVWSFNPIMQTKA), 413-453 (ISKS…NLCE), 480-520 (AAPS…QQLQ), 525-564 (PEPIAINCTAFNHNGNLLVTGAADGVIRLFDMQQHECAMS), 567-606 (AHYGEVYSVEFSYDENTVYSIGEDGKFIQWNIHKSGLKVS), 629-667 (VQVPRGRLFAFDSEGNYMLTCSATGGVIYKLGGDEKVLE), and 674-712 (GHRAPVVTVDWSTAMDCGTCLTASMDGKIKLTTLLAHKA).

It belongs to the WD repeat WDR91 family. Interacts with WDR81; involved in early to late endosome cargo transport. Interacts with BECN1; negatively regulates the PI3 kinase/PI3K activity associated with endosomal membranes.

The protein resides in the early endosome membrane. It localises to the late endosome membrane. Its function is as follows. Functions as a negative regulator of the PI3 kinase/PI3K activity associated with endosomal membranes via BECN1, a core subunit of the PI3K complex. By modifying the phosphatidylinositol 3-phosphate/PtdInsP3 content of endosomal membranes may regulate endosome fusion, recycling, sorting and early to late endosome transport. It is for instance, required for the delivery of cargos like BST2/tetherin from early to late endosome and thereby participates indirectly to their degradation by the lysosome. May play a role in meiosis. This Pongo abelii (Sumatran orangutan) protein is WD repeat-containing protein 91.